The following is a 611-amino-acid chain: DNA mismatch repair protein MutL (611 aa).

The disordered stretch occupies residues 364-384; the sequence is NVNSKPSKYRPATSPTVPKYT.

This sequence belongs to the DNA mismatch repair MutL/HexB family.

Its function is as follows. This protein is involved in the repair of mismatches in DNA. It is required for dam-dependent methyl-directed DNA mismatch repair. May act as a 'molecular matchmaker', a protein that promotes the formation of a stable complex between two or more DNA-binding proteins in an ATP-dependent manner without itself being part of a final effector complex. This chain is DNA mismatch repair protein MutL, found in Rickettsia bellii (strain OSU 85-389).